A 1094-amino-acid polypeptide reads, in one-letter code: AP-3 complex subunit beta-1 (1094 aa).

A compositionally biased stretch (polar residues) spans 1 to 11 (MSSNSFPYNEQ). 2 disordered regions span residues 1 to 31 (MSSN…ISPS) and 268 to 292 (DNGK…KPYT). Residues S276 and S609 each carry the phosphoserine modification. The tract at residues 662–811 (PAGKAKQENS…EKKTKQDRTP (150 aa)) is disordered. Residues 666 to 677 (AKQENSAKKFYS) show a composition bias toward basic and acidic residues. Composition is skewed to acidic residues over residues 678-696 (ESEE…ESES) and 705-726 (ESGE…EQDS). 2 stretches are compositionally biased toward basic and acidic residues: residues 727 to 738 (ESGRESGLENKR) and 748 to 764 (GKSD…KSKT). Residues S750 and S752 each carry the phosphoserine modification. Residues 765-777 (SDSSNDESSSIED) show a composition bias toward low complexity. The span at 778–791 (SSSDSESESEPESE) shows a compositional bias: acidic residues. A compositionally biased stretch (basic and acidic residues) spans 792–811 (SESRRVTKEKEKKTKQDRTP).

This sequence belongs to the adaptor complexes large subunit family. In terms of assembly, adaptor protein complex 3 (AP-3) is a heterotetramer composed of two large adaptins (delta-type subunit AP3D1 and beta-type subunit AP3B1 or AP3B2), a medium adaptin (mu-type subunit AP3M1 or AP3M2) and a small adaptin (sigma-type subunit APS1 or AP3S2). AP-3 associates with the BLOC-1 complex. Interacts with KIF3A; interaction is direct; interaction is impaired by pyrophosphorylation of AP3B1. In terms of processing, phosphorylated on serine residues. Pyrophosphorylation by 5-diphosphoinositol pentakisphosphate (5-IP7) impairs interaction with KIF3A. Serine pyrophosphorylation is achieved by Mg(2+)-dependent, but enzyme independent transfer of a beta-phosphate from a inositol pyrophosphate to a pre-phosphorylated serine residue. Ubiquitously expressed.

The protein resides in the cytoplasmic vesicle. It localises to the clathrin-coated vesicle membrane. The protein localises to the golgi apparatus. Its function is as follows. Subunit of non-clathrin- and clathrin-associated adaptor protein complex 3 (AP-3) that plays a role in protein sorting in the late-Golgi/trans-Golgi network (TGN) and/or endosomes. The AP complexes mediate both the recruitment of clathrin to membranes and the recognition of sorting signals within the cytosolic tails of transmembrane cargo molecules. AP-3 appears to be involved in the sorting of a subset of transmembrane proteins targeted to lysosomes and lysosome-related organelles. In concert with the BLOC-1 complex, AP-3 is required to target cargos into vesicles assembled at cell bodies for delivery into neurites and nerve terminals. The protein is AP-3 complex subunit beta-1 (AP3B1) of Homo sapiens (Human).